We begin with the raw amino-acid sequence, 376 residues long: tRNA-specific 2-thiouridylase MnmA (376 aa).

Residues 17-24 and M43 contribute to the ATP site; that span reads GMSGGVDS. Positions 103-105 are interaction with target base in tRNA; that stretch reads NPD. Catalysis depends on C108, which acts as the Nucleophile. An intrachain disulfide couples C108 to C205. G132 contributes to the ATP binding site. Positions 155-157 are interaction with tRNA; sequence KDQ. C205 functions as the Cysteine persulfide intermediate in the catalytic mechanism. The tract at residues 315–316 is interaction with tRNA; sequence RY.

This sequence belongs to the MnmA/TRMU family.

The protein localises to the cytoplasm. It catalyses the reaction S-sulfanyl-L-cysteinyl-[protein] + uridine(34) in tRNA + AH2 + ATP = 2-thiouridine(34) in tRNA + L-cysteinyl-[protein] + A + AMP + diphosphate + H(+). Functionally, catalyzes the 2-thiolation of uridine at the wobble position (U34) of tRNA, leading to the formation of s(2)U34. The polypeptide is tRNA-specific 2-thiouridylase MnmA (Dichelobacter nodosus (strain VCS1703A)).